Here is a 382-residue protein sequence, read N- to C-terminus: Lipid-A-disaccharide synthase (382 aa).

It belongs to the LpxB family.

It catalyses the reaction 2-N,3-O-bis[(3R)-3-hydroxytetradecanoyl]-alpha-D-glucosaminyl 1-phosphate + UDP-2-N,3-O-bis[(3R)-3-hydroxytetradecanoyl]-alpha-D-glucosamine = lipid A disaccharide (E. coli) + UDP + H(+). The enzyme catalyses a lipid X + a UDP-2-N,3-O-bis[(3R)-3-hydroxyacyl]-alpha-D-glucosamine = a lipid A disaccharide + UDP + H(+). It participates in glycolipid biosynthesis; lipid IV(A) biosynthesis; lipid IV(A) from (3R)-3-hydroxytetradecanoyl-[acyl-carrier-protein] and UDP-N-acetyl-alpha-D-glucosamine: step 5/6. In terms of biological role, condensation of UDP-2,3-diacylglucosamine and 2,3-diacylglucosamine-1-phosphate to form lipid A disaccharide, a precursor of lipid A, a phosphorylated glycolipid that anchors the lipopolysaccharide to the outer membrane of the cell. In Shigella flexneri, this protein is Lipid-A-disaccharide synthase.